A 311-amino-acid polypeptide reads, in one-letter code: uncharacterized protein (311 aa).

The next 9 membrane-spanning stretches (helical) occupy residues Leu11 to Ser31, Val34 to Leu54, Leu72 to Ile92, His101 to Gln121, Ile147 to Met167, Trp198 to Ser218, Gly233 to Ile253, Phe257 to Leu277, and Thr279 to Pro299.

The protein localises to the cell membrane. This is an uncharacterized protein from Mycoplasma pneumoniae (strain ATCC 29342 / M129 / Subtype 1) (Mycoplasmoides pneumoniae).